Reading from the N-terminus, the 189-residue chain is Insecticyanin-A (189 aa).

Intrachain disulfides connect Cys-9/Cys-119 and Cys-43/Cys-175.

This sequence belongs to the calycin superfamily. Lipocalin family. Homotetramer. Synthesized only in the caterpillars, apparently by the epidermis and secreted into the hemolymph. The protein is passed over from the larval hemolymph to that of pupae and adults and is sequestered in the eggs.

The protein resides in the secreted. This protein binds a chromophore: biliverdin IX, isomer gamma. Mixed with lipoprotein-bound carotenes, this blue protein provides hornworms with their green cryptic coloration which serves a camouflage. In Manduca sexta (Tobacco hawkmoth), this protein is Insecticyanin-A (INSA).